Consider the following 697-residue polypeptide: tRNA 5-methylaminomethyl-2-thiouridine biosynthesis bifunctional protein MnmC (697 aa).

Residues 1–269 are tRNA (mnm(5)s(2)U34)-methyltransferase; the sequence is MNKTPLLSVS…LRQQLQQQFA (269 aa). Residues 287-697 are FAD-dependent cmnm(5)s(2)U34 oxidoreductase; that stretch reads IGGGIASASL…RKLLKGKALM (411 aa).

In the N-terminal section; belongs to the methyltransferase superfamily. tRNA (mnm(5)s(2)U34)-methyltransferase family. The protein in the C-terminal section; belongs to the DAO family. FAD is required as a cofactor.

The protein resides in the cytoplasm. The enzyme catalyses 5-aminomethyl-2-thiouridine(34) in tRNA + S-adenosyl-L-methionine = 5-methylaminomethyl-2-thiouridine(34) in tRNA + S-adenosyl-L-homocysteine + H(+). Its function is as follows. Catalyzes the last two steps in the biosynthesis of 5-methylaminomethyl-2-thiouridine (mnm(5)s(2)U) at the wobble position (U34) in tRNA. Catalyzes the FAD-dependent demodification of cmnm(5)s(2)U34 to nm(5)s(2)U34, followed by the transfer of a methyl group from S-adenosyl-L-methionine to nm(5)s(2)U34, to form mnm(5)s(2)U34. This is tRNA 5-methylaminomethyl-2-thiouridine biosynthesis bifunctional protein MnmC from Shewanella frigidimarina (strain NCIMB 400).